We begin with the raw amino-acid sequence, 228 residues long: Lipoprotein-releasing system ATP-binding protein LolD (228 aa).

One can recognise an ABC transporter domain in the interval 7 to 227 (LQLSGIERHY…TIEDGKVVEL (221 aa)). 43–50 (APSGTGKS) serves as a coordination point for ATP.

It belongs to the ABC transporter superfamily. Lipoprotein translocase (TC 3.A.1.125) family. In terms of assembly, the complex is composed of two ATP-binding proteins (LolD) and two transmembrane proteins (LolC and LolE).

Its subcellular location is the cell inner membrane. Its function is as follows. Part of the ABC transporter complex LolCDE involved in the translocation of mature outer membrane-directed lipoproteins, from the inner membrane to the periplasmic chaperone, LolA. Responsible for the formation of the LolA-lipoprotein complex in an ATP-dependent manner. This is Lipoprotein-releasing system ATP-binding protein LolD from Rhizobium meliloti (strain 1021) (Ensifer meliloti).